The sequence spans 231 residues: High-affinity zinc uptake system ATP-binding protein ZnuC (231 aa).

In terms of domain architecture, ABC transporter spans 4-230; it reads VSLKDIVFGY…CLTWNSCDEL (227 aa).

It belongs to the ABC transporter superfamily. The complex is composed of two ATP-binding proteins (ZnuC), two transmembrane proteins (ZnuB) and a solute-binding protein (ZnuA).

It localises to the cell membrane. The catalysed reaction is Zn(2+)(out) + ATP(in) + H2O(in) = Zn(2+)(in) + ADP(in) + phosphate(in) + H(+)(in). Its function is as follows. Part of the high-affinity ABC transporter complex ZnuABC involved in zinc import. Responsible for energy coupling to the transport system. ZnuABC-mediated zinc transport is required for comF expression and competence development. The protein is High-affinity zinc uptake system ATP-binding protein ZnuC (znuC) of Bacillus subtilis (strain 168).